The sequence spans 480 residues: Vinorine hydroxylase (480 aa).

The chain crosses the membrane as a helical span at residues 3–23 (LLQILLAIAGLLAILLLQKQW). Heme is bound at residue cysteine 418.

It belongs to the cytochrome P450 family. Requires heme as cofactor. As to expression, mainly expressed in roots and, to a lesser extent, in leaves.

Its subcellular location is the membrane. It catalyses the reaction vinorine + reduced [NADPH--hemoprotein reductase] + O2 = vomilenine + oxidized [NADPH--hemoprotein reductase] + H2O + H(+). The catalysed reaction is vomilenine = perakine. It functions in the pathway alkaloid biosynthesis; ajmaline biosynthesis. In terms of biological role, a cytochrome P450 monooxygenase involved in the biosynthesis of ajmaline-type monoterpenoid indole alkaloids (MIAs) natural products, important plant-derived pharmaceuticals used in the therapy of heart disorders. Catalyzes the hydroxylation of vinorine to vomilenine, an intermediate chemical in the biosynthesis of ajmaline. Supports also vomilenine isomerization to perakine. This Rauvolfia serpentina (Serpentine wood) protein is Vinorine hydroxylase.